A 150-amino-acid chain; its full sequence is MKEMVDYGIIGFLIFLSVIVIAIAIERLWFFATLRVDDYTDRRKLELALHKRLTLVATIGSNAPYIGLLGTVMGIMLTFMDLGSASGIDTKAIMTNLALALKATGMGLLVAIPAIVIYNLLVRKSEILVTKWDIFHHPVDTQSHEIYSKA.

3 consecutive transmembrane segments (helical) span residues 5–25, 63–83, and 97–117; these read VDYGIIGFLIFLSVIVIAIAI, APYIGLLGTVMGIMLTFMDLG, and LALALKATGMGLLVAIPAIVI.

This sequence belongs to the ExbB/TolQ family.

The protein localises to the cell inner membrane. The polypeptide is Putative biopolymer transport protein ExbB-like 2 (Helicobacter pylori (strain ATCC 700392 / 26695) (Campylobacter pylori)).